The chain runs to 345 residues: Beta-2-glycoprotein 1 (345 aa).

The signal sequence occupies residues 1–19; the sequence is MISPVLILFSSFLCHVAIA. Sushi domains are found at residues 21–81, 82–139, 140–202, and 203–262; these read RTCP…KCTP, RVCP…VCAP, IICP…ECRE, and VKCP…SCKA. 11 cysteine pairs are disulfide-bonded: C23/C66, C51/C79, C84/C124, C110/C137, C142/C188, C174/C200, C205/C248, C234/C260, C264/C315, C300/C325, and C307/C345. An O-linked (GalNAc...) threonine glycan is attached at T33. T149 carries an O-linked (GalNAc...) threonine glycan. N162 carries an N-linked (GlcNAc...) (complex) asparagine glycan. N-linked (GlcNAc...) asparagine glycans are attached at residues N183 and N193. A glycan (N-linked (GlcNAc...) asparagine) is linked at N253. The segment at 263-345 is sushi-like; it reads SCKVPVKKAT…KTDASDVKPC (83 aa).

N- and O-glycosylated. PubMed:6587378 also reports glycosylation on 'Asn-188' for their allele. As to expression, expressed by the liver and secreted in plasma.

The protein resides in the secreted. Functionally, binds to various kinds of negatively charged substances such as heparin, phospholipids, and dextran sulfate. May prevent activation of the intrinsic blood coagulation cascade by binding to phospholipids on the surface of damaged cells. The sequence is that of Beta-2-glycoprotein 1 (APOH) from Homo sapiens (Human).